A 200-amino-acid polypeptide reads, in one-letter code: Large ribosomal subunit protein uL4 (200 aa).

The interval 43–72 is disordered; sequence RAQKTRAEVSGSGKKPWRQKGTGRARSGDI.

The protein belongs to the universal ribosomal protein uL4 family. In terms of assembly, part of the 50S ribosomal subunit.

Functionally, one of the primary rRNA binding proteins, this protein initially binds near the 5'-end of the 23S rRNA. It is important during the early stages of 50S assembly. It makes multiple contacts with different domains of the 23S rRNA in the assembled 50S subunit and ribosome. Its function is as follows. Forms part of the polypeptide exit tunnel. The protein is Large ribosomal subunit protein uL4 of Haemophilus ducreyi (strain 35000HP / ATCC 700724).